The sequence spans 654 residues: Pentatricopeptide repeat-containing protein At3g16610 (654 aa).

PPR repeat units lie at residues 1–32, 34–64, 67–101, 102–136, 137–171, 172–203, 204–238, 239–269, 270–304, 307–341, 342–372, 373–407, 408–442, 443–473, 474–508, 509–543, and 546–576; these read MFLS…SLTL, SSTV…IPHP, NPIA…GVRP, TKYT…DFAT, DMYV…DMVA, WNAM…GLSP, NLST…GFSN, DLVV…DFKK, NEVT…DNVA, TPVA…GFIL, DLTV…IGLK, DVIS…GIRP, DITT…GYAV, NTSI…MHKR, DIVS…GVNP, DEVT…DFNV, and RIDH…MPFE. A type E motif; degenerate region spans residues 581 to 654; that stretch reads VLGTLLSACW…KTPGYSWVDV (74 aa).

Belongs to the PPR family. PCMP-E subfamily.

This Arabidopsis thaliana (Mouse-ear cress) protein is Pentatricopeptide repeat-containing protein At3g16610 (PCMP-E91).